A 382-amino-acid chain; its full sequence is ATP phosphoribosyltransferase regulatory subunit (382 aa).

Belongs to the class-II aminoacyl-tRNA synthetase family. HisZ subfamily. In terms of assembly, heteromultimer composed of HisG and HisZ subunits.

It is found in the cytoplasm. It participates in amino-acid biosynthesis; L-histidine biosynthesis; L-histidine from 5-phospho-alpha-D-ribose 1-diphosphate: step 1/9. In terms of biological role, required for the first step of histidine biosynthesis. May allow the feedback regulation of ATP phosphoribosyltransferase activity by histidine. This Acidovorax sp. (strain JS42) protein is ATP phosphoribosyltransferase regulatory subunit.